A 143-amino-acid chain; its full sequence is Flagellar assembly factor FliW (143 aa).

This sequence belongs to the FliW family. Interacts with translational regulator CsrA and flagellin(s).

It localises to the cytoplasm. Its function is as follows. Acts as an anti-CsrA protein, binds CsrA and prevents it from repressing translation of its target genes, one of which is flagellin. Binds to flagellin and participates in the assembly of the flagellum. This is Flagellar assembly factor FliW from Clostridium botulinum (strain ATCC 19397 / Type A).